A 166-amino-acid polypeptide reads, in one-letter code: 3-isopropylmalate dehydratase small subunit (166 aa).

The protein belongs to the LeuD family. LeuD type 2 subfamily. As to quaternary structure, heterodimer of LeuC and LeuD.

It catalyses the reaction (2R,3S)-3-isopropylmalate = (2S)-2-isopropylmalate. It functions in the pathway amino-acid biosynthesis; L-leucine biosynthesis; L-leucine from 3-methyl-2-oxobutanoate: step 2/4. Functionally, catalyzes the isomerization between 2-isopropylmalate and 3-isopropylmalate, via the formation of 2-isopropylmaleate. The protein is 3-isopropylmalate dehydratase small subunit of Heliobacterium modesticaldum (strain ATCC 51547 / Ice1).